The primary structure comprises 905 residues: FIGNL1-interacting regulator of recombination and mitosis (905 aa).

Serine 101 and serine 796 each carry phosphoserine. Lysine 845 is subject to N6-acetyllysine.

Interacts (via its N-terminal region) with PLK1; controls PLK1 kinase activity. Interacts (via the KVVXF motif) with PPP1CC; controls PLK1 kinase activity. Interacts with FIGNL1; may regulate homologous recombination. In terms of processing, phosphorylation at Ser-101 by PLK1 strengthens FIRRM-PLK1 interaction. Phosphorylation at Ser-796 by PLK1 negatively regulates its interaction with PPP1CC.

It is found in the chromosome. It localises to the centromere. The protein localises to the kinetochore. Its subcellular location is the nucleus. The protein resides in the midbody. It is found in the cytoplasm. It localises to the cytoskeleton. The protein localises to the spindle. Its function is as follows. Regulates PLK1 kinase activity at kinetochores and promotes faithful chromosome segregation in prometaphase by bridging kinase and phosphatase activities. Phosphorylation of FIRRM by PLK1 negatively regulates its interaction with the phosphatase, PPP1CC, thus creating a negative feedback loop for maintaining proper PLK1 kinase activity during mitosis. In complex with FIGL1 may regulate homologous recombination. The chain is FIGNL1-interacting regulator of recombination and mitosis from Rattus norvegicus (Rat).